The sequence spans 512 residues: Circadian clock oscillator protein KaiC (512 aa).

KaiC domains follow at residues 1-243 (MQFP…ISIF) and 257-512 (VRVS…SSED). Residues glycine 45, threonine 46, glycine 47, lysine 48, threonine 49, serine 85, lysine 220, leucine 221, arginine 222, threonine 224, histidine 226, threonine 286, glycine 287, threonine 288, glycine 289, lysine 290, threonine 291, and leucine 292 each coordinate ATP. Threonine 49 provides a ligand contact to Mg(2+). Threonine 291 is a Mg(2+) binding site. Glutamate 314 lines the Mg(2+) pocket. Tryptophan 327 serves as a coordination point for ATP. A Phosphoserine; by autocatalysis modification is found at serine 427. Threonine 428 carries the phosphothreonine; by autocatalysis modification. ATP contacts are provided by arginine 447, lysine 453, methionine 454, arginine 455, serine 457, histidine 459, and lysine 461.

Belongs to the KaiC family. As to quaternary structure, homohexamer; hexamerization is dependent on ATP-binding. The KaiABC complex composition changes during the circadian cycle to control KaiC phosphorylation. Complexes KaiC(6), KaiA(2-4):KaiC(6), KaiB(6):KaiC(6) and KaiC(6):KaiB(6):KaiA(12) are among the most important forms, many form cooperatively. KaiC interacts with SasA, activating its autokinase function and leading to RpaA activation. The cofactor is Mg(2+). In terms of processing, phosphorylated on serine and threonine residues by autocatalysis. Has a 4 step phosphorylation cycle; the autokinase acts first on Thr-428, then Ser-427. When Ser-427 is modified KaiC switches to an autophosphatase mode, acting first on phospho-Thr-428 then phospho-Ser-427.

The catalysed reaction is L-seryl-[protein] + ATP = O-phospho-L-seryl-[protein] + ADP + H(+). It carries out the reaction L-threonyl-[protein] + ATP = O-phospho-L-threonyl-[protein] + ADP + H(+). The enzyme catalyses ATP + H2O = ADP + phosphate + H(+). With respect to regulation, the interaction with KaiA enhances its phosphorylation status, while the interaction with KaiB decreases it. Functionally, central component of the KaiABC oscillator complex, which constitutes the main circadian regulator in cyanobacteria. Complex composition changes during the circadian cycle to control KaiC phosphorylation. KaiA stimulates KaiC autophosphorylation, while KaiB sequesters KaiA, leading to KaiC autodephosphorylation. Clock output pathways impact the RpaA transcriptional regulator. KaiC enhances the autophosphorylation activity of SasA, which then transfers its phosphate group to RpaA to activate it. KaiB and KaiC together enhance the phospho-RpaA dephosphatase activity of CikA. In terms of biological role, has a weak, temperature-independent ATPase activity; ATPase activity defines the circadian period. The phosphorylation state of KaiC modulates its ATPase activity and effects KaiB binding. In Parasynechococcus marenigrum (strain WH8102), this protein is Circadian clock oscillator protein KaiC.